A 250-amino-acid chain; its full sequence is Ditrans,polycis-undecaprenyl-diphosphate synthase ((2E,6E)-farnesyl-diphosphate specific) (250 aa).

Residue Asp20 is part of the active site. Asp20 contributes to the Mg(2+) binding site. Substrate is bound by residues Gly21–Arg24, Trp25, Arg33, His37, and Ser65–Glu67. Asn68 serves as the catalytic Proton acceptor. Substrate is bound by residues Trp69, Arg71, Arg188, and Arg194–Ser196. Glu207 lines the Mg(2+) pocket.

This sequence belongs to the UPP synthase family. As to quaternary structure, homodimer. Mg(2+) is required as a cofactor.

The catalysed reaction is 8 isopentenyl diphosphate + (2E,6E)-farnesyl diphosphate = di-trans,octa-cis-undecaprenyl diphosphate + 8 diphosphate. In terms of biological role, catalyzes the sequential condensation of isopentenyl diphosphate (IPP) with (2E,6E)-farnesyl diphosphate (E,E-FPP) to yield (2Z,6Z,10Z,14Z,18Z,22Z,26Z,30Z,34E,38E)-undecaprenyl diphosphate (di-trans,octa-cis-UPP). UPP is the precursor of glycosyl carrier lipid in the biosynthesis of bacterial cell wall polysaccharide components such as peptidoglycan and lipopolysaccharide. In Vibrio cholerae serotype O1 (strain ATCC 39315 / El Tor Inaba N16961), this protein is Ditrans,polycis-undecaprenyl-diphosphate synthase ((2E,6E)-farnesyl-diphosphate specific).